Here is a 284-residue protein sequence, read N- to C-terminus: MFIISSKNMLQKAQHAGYAVPAFNIHNLETLQVVVETAAEMRSPLIVAGTPGTFSYAGMGNIVAIAGDLAREYNLPLAIHLDHHESLADIESKVMAGIRSVMIDGSHFPFEENVALVKSVVDFCHRYDTSVEAELGRLGGIEDDLVVDSKDALYTNPQQAREFVAHTGIDSLAVAIGTAHGMYAAEPKLDFERLAEIRALVDIPLVLHGASGLPESDIRQAISLGVCKVNVATELKIAFSDALKEYFLQNPKANDPRHYMQPAKQAMKEVVRKVIHVCGCEGQL.

Aspartate 82 serves as the catalytic Proton donor. Residues histidine 83 and histidine 180 each coordinate Zn(2+). Residue glycine 181 coordinates dihydroxyacetone phosphate. Zn(2+) is bound at residue histidine 208. Dihydroxyacetone phosphate-binding positions include 209 to 211 (GAS) and 230 to 233 (NVAT).

This sequence belongs to the class II fructose-bisphosphate aldolase family. TagBP aldolase GatY subfamily. As to quaternary structure, forms a complex with GatZ. Requires Zn(2+) as cofactor.

The enzyme catalyses D-tagatofuranose 1,6-bisphosphate = D-glyceraldehyde 3-phosphate + dihydroxyacetone phosphate. The protein operates within carbohydrate metabolism; D-tagatose 6-phosphate degradation; D-glyceraldehyde 3-phosphate and glycerone phosphate from D-tagatose 6-phosphate: step 2/2. In terms of biological role, catalytic subunit of the tagatose-1,6-bisphosphate aldolase GatYZ, which catalyzes the reversible aldol condensation of dihydroxyacetone phosphate (DHAP or glycerone-phosphate) with glyceraldehyde 3-phosphate (G3P) to produce tagatose 1,6-bisphosphate (TBP). Requires GatZ subunit for full activity and stability. Is involved in the catabolism of galactitol. The polypeptide is D-tagatose-1,6-bisphosphate aldolase subunit GatY (Salmonella paratyphi B (strain ATCC BAA-1250 / SPB7)).